Reading from the N-terminus, the 458-residue chain is Monomethylamine methyltransferase MtmB (458 aa).

O202 is a non-standard amino acid (pyrrolysine).

It belongs to the monomethylamine methyltransferase family. In terms of assembly, can form a complex with MtmC.

It catalyses the reaction Co(I)-[methylamine-specific corrinoid protein] + methylamine + H(+) = methyl-Co(III)-[methylamine-specific corrinoid protein] + NH4(+). The protein operates within one-carbon metabolism; methanogenesis from methylamine. In terms of biological role, catalyzes the transfer of the methyl group from monomethylamine to the corrinoid cofactor of MtmC. The protein is Monomethylamine methyltransferase MtmB (mtmB1) of Methanosarcina mazei (strain ATCC BAA-159 / DSM 3647 / Goe1 / Go1 / JCM 11833 / OCM 88) (Methanosarcina frisia).